The sequence spans 247 residues: Exosome complex component Rrp4 (247 aa).

Residues 75 to 148 form the S1 motif domain; sequence DDLVIGIVEN…RDPVITVKGK (74 aa). Residues 154–220 form the KH domain; that stretch reads TEGVVVDVKP…QAIKLIELKA (67 aa).

Belongs to the RRP4 family. Component of the archaeal exosome complex. Forms a trimer of Rrp4 and/or Csl4 subunits. The trimer associates with a hexameric ring-like arrangement composed of 3 Rrp41-Rrp42 heterodimers.

The protein resides in the cytoplasm. Functionally, non-catalytic component of the exosome, which is a complex involved in RNA degradation. Increases the RNA binding and the efficiency of RNA degradation. Confers strong poly(A) specificity to the exosome. The chain is Exosome complex component Rrp4 from Thermosphaera aggregans (strain DSM 11486 / M11TL).